The primary structure comprises 1055 residues: Pre-mRNA-splicing factor ATP-dependent RNA helicase-like protein cdc28 (1055 aa).

Over residues 67–78 (PREGSRPKENYN) the composition is skewed to basic and acidic residues. Residues 67–184 (PREGSRPKEN…TERLNDLRER (118 aa)) are disordered. The segment covering 112 to 121 (PLKKKSRSKT) has biased composition (basic residues). The segment covering 122–132 (PKREIARRQRD) has biased composition (basic and acidic residues). Residues 133-145 (EDEWESDEYEEVV) are compositionally biased toward acidic residues. A compositionally biased stretch (basic and acidic residues) spans 163–184 (QNHDYEKSSDPETERLNDLRER). A Helicase ATP-binding domain is found at 428–592 (LKAINEYQVL…FDEAPVFYVP (165 aa)). 441 to 448 (AETGSGKT) contacts ATP. Residues 539–542 (DEAH) carry the DEAH box motif. Positions 617-790 (TILQIHTTQP…NIVLLLKSLG (174 aa)) constitute a Helicase C-terminal domain.

This sequence belongs to the DEAD box helicase family. DEAH subfamily. DDX16/PRP8 sub-subfamily.

It is found in the nucleus. It carries out the reaction ATP + H2O = ADP + phosphate + H(+). Involved in pre-mRNA splicing. Is required together with ATP and at least one other factor, for the first cleavage-ligation reaction. Functions as a molecular motor in the activation of the precatalytic spliceosome for the first transesterification reaction of pre-mRNA splicing by hydrolyzing ATP to cause the activation of the spliceosome without the occurrence of splicing. This chain is Pre-mRNA-splicing factor ATP-dependent RNA helicase-like protein cdc28 (cdc28), found in Schizosaccharomyces pombe (strain 972 / ATCC 24843) (Fission yeast).